A 147-amino-acid chain; its full sequence is Large ribosomal subunit protein uL15 (147 aa).

The interval 1-57 (MRLHDVKPQKGSKKRKKRVARGISAGQGASAGLGMRGQKSRSGSGTRPGFEGGQQPL) is disordered. Over residues 10-20 (KGSKKRKKRVA) the composition is skewed to basic residues.

This sequence belongs to the universal ribosomal protein uL15 family. In terms of assembly, part of the 50S ribosomal subunit.

In terms of biological role, binds to the 23S rRNA. The chain is Large ribosomal subunit protein uL15 from Nostoc punctiforme (strain ATCC 29133 / PCC 73102).